Reading from the N-terminus, the 945-residue chain is Kinesin-like protein KIN-UA (945 aa).

Residues Met1 to Asp54 are disordered. Residues Ala22–Pro31 show a composition bias toward low complexity. The Kinesin motor domain occupies Arg57–Ile399. An ATP-binding site is contributed by Gly142–Thr149. Positions Arg369 to Gly377 match the D-BOX motif. The stretch at Tyr415–Asp644 forms a coiled coil. ARM repeat units follow at residues Arg683–Ala722, Asp724–Met764, Gly766–Gly806, and Glu808–Lys847.

Belongs to the TRAFAC class myosin-kinesin ATPase superfamily. Kinesin family. Ungrouped subfamily.

It localises to the cytoplasm. The protein resides in the cytoskeleton. In Oryza sativa subsp. japonica (Rice), this protein is Kinesin-like protein KIN-UA.